The sequence spans 263 residues: Hydroxyethylthiazole kinase 1 (263 aa).

M42 contacts substrate. ATP is bound by residues K118 and T164. Residue G191 participates in substrate binding.

The protein belongs to the Thz kinase family. The cofactor is Mg(2+).

The catalysed reaction is 5-(2-hydroxyethyl)-4-methylthiazole + ATP = 4-methyl-5-(2-phosphooxyethyl)-thiazole + ADP + H(+). It functions in the pathway cofactor biosynthesis; thiamine diphosphate biosynthesis; 4-methyl-5-(2-phosphoethyl)-thiazole from 5-(2-hydroxyethyl)-4-methylthiazole: step 1/1. Functionally, catalyzes the phosphorylation of the hydroxyl group of 4-methyl-5-beta-hydroxyethylthiazole (THZ). The chain is Hydroxyethylthiazole kinase 1 from Clostridium botulinum (strain ATCC 19397 / Type A).